A 136-amino-acid chain; its full sequence is Large ribosomal subunit protein uL3 (136 aa).

Position 83 is an N5-methylglutamine (Gln83).

The protein belongs to the universal ribosomal protein uL3 family. In terms of assembly, part of the 50S ribosomal subunit. Forms a cluster with proteins L14 and L19. Methylated by PrmB.

Functionally, one of the primary rRNA binding proteins, it binds directly near the 3'-end of the 23S rRNA, where it nucleates assembly of the 50S subunit. The sequence is that of Large ribosomal subunit protein uL3 (rplC) from Carsonella ruddii.